The primary structure comprises 503 residues: MEFSVKSGSPEKQRSACIVVGVFEPRRLSPIAEQLDKISDGYISALLRRGELEGKPGQTLLLHHVPNILSERILLIGCGKERELDERQYKQVIQKTINTLNDTGSMEAVCFLTELHVKGRNNYWKVRQAVETAKETLYSFDQLKTNKSEPRRPLRKMVFNVPTRRELTSGERAIQHGLAIAAGIKAAKDLGNMPPNICNAAYLASQARQLADTYSKNVITRVIGEQQMRELGMNSYLAVGNGSQNESLMSVIEYKGNPSEDARPIVLVGKGLTFDSGGISIKPAEGMDEMKYDMCGAAAVYGVMRMVAELQLPLNVIGVLAGCENMPGGRAYRPGDVLTTMSGQTVEVLNTDAEGRLVLCDVLTYVERFEPEAVIDVATLTGACVIALGHHITGLMSNHNPLAHELIGASELAGDRAWRLPLADEFQDQLESNFADMANIGGRPGGAITAGCFLSRFTRKYNWAHLDIAGTAWRSGKAKGATGRPVALLSQFLLNRAGFNGEE.

Mn(2+) contacts are provided by K270 and D275. The active site involves K282. Mn(2+) contacts are provided by D293, D352, and E354. Residue R356 is part of the active site.

Belongs to the peptidase M17 family. Mn(2+) is required as a cofactor.

It localises to the cytoplasm. The enzyme catalyses Release of an N-terminal amino acid, Xaa-|-Yaa-, in which Xaa is preferably Leu, but may be other amino acids including Pro although not Arg or Lys, and Yaa may be Pro. Amino acid amides and methyl esters are also readily hydrolyzed, but rates on arylamides are exceedingly low.. It carries out the reaction Release of an N-terminal amino acid, preferentially leucine, but not glutamic or aspartic acids.. Its function is as follows. Presumably involved in the processing and regular turnover of intracellular proteins. Catalyzes the removal of unsubstituted N-terminal amino acids from various peptides. The chain is Probable cytosol aminopeptidase from Klebsiella pneumoniae (strain 342).